The sequence spans 248 residues: UDP-2,3-diacylglucosamine hydrolase (248 aa).

Mn(2+) contacts are provided by D7, H9, D40, N78, and H113. 78 to 79 (NR) lines the substrate pocket. Positions 121, 159, 163, 166, and 194 each coordinate substrate. 2 residues coordinate Mn(2+): H194 and H196.

This sequence belongs to the LpxH family. The cofactor is Mn(2+).

The protein localises to the cell inner membrane. It carries out the reaction UDP-2-N,3-O-bis[(3R)-3-hydroxytetradecanoyl]-alpha-D-glucosamine + H2O = 2-N,3-O-bis[(3R)-3-hydroxytetradecanoyl]-alpha-D-glucosaminyl 1-phosphate + UMP + 2 H(+). Its pathway is glycolipid biosynthesis; lipid IV(A) biosynthesis; lipid IV(A) from (3R)-3-hydroxytetradecanoyl-[acyl-carrier-protein] and UDP-N-acetyl-alpha-D-glucosamine: step 4/6. Hydrolyzes the pyrophosphate bond of UDP-2,3-diacylglucosamine to yield 2,3-diacylglucosamine 1-phosphate (lipid X) and UMP by catalyzing the attack of water at the alpha-P atom. Involved in the biosynthesis of lipid A, a phosphorylated glycolipid that anchors the lipopolysaccharide to the outer membrane of the cell. The chain is UDP-2,3-diacylglucosamine hydrolase from Pseudomonas syringae pv. tomato (strain ATCC BAA-871 / DC3000).